Consider the following 272-residue polypeptide: 2-dehydro-3-deoxyphosphooctonate aldolase (272 aa).

Belongs to the KdsA family.

It localises to the cytoplasm. The catalysed reaction is D-arabinose 5-phosphate + phosphoenolpyruvate + H2O = 3-deoxy-alpha-D-manno-2-octulosonate-8-phosphate + phosphate. It functions in the pathway carbohydrate biosynthesis; 3-deoxy-D-manno-octulosonate biosynthesis; 3-deoxy-D-manno-octulosonate from D-ribulose 5-phosphate: step 2/3. It participates in bacterial outer membrane biogenesis; lipopolysaccharide biosynthesis. The sequence is that of 2-dehydro-3-deoxyphosphooctonate aldolase from Trichlorobacter lovleyi (strain ATCC BAA-1151 / DSM 17278 / SZ) (Geobacter lovleyi).